Reading from the N-terminus, the 402-residue chain is 1-deoxy-D-xylulose 5-phosphate reductoisomerase (402 aa).

5 residues coordinate NADPH: Thr-13, Gly-14, Ser-15, Ile-16, and Asn-126. Lys-127 contacts 1-deoxy-D-xylulose 5-phosphate. Glu-128 is an NADPH binding site. A Mn(2+)-binding site is contributed by Asp-152. 1-deoxy-D-xylulose 5-phosphate is bound by residues Ser-153, Glu-154, Ser-188, and His-211. Glu-154 is a binding site for Mn(2+). An NADPH-binding site is contributed by Gly-217. 4 residues coordinate 1-deoxy-D-xylulose 5-phosphate: Ser-224, Asn-229, Lys-230, and Glu-233. Residue Glu-233 participates in Mn(2+) binding.

This sequence belongs to the DXR family. Requires Mg(2+) as cofactor. Mn(2+) is required as a cofactor.

It carries out the reaction 2-C-methyl-D-erythritol 4-phosphate + NADP(+) = 1-deoxy-D-xylulose 5-phosphate + NADPH + H(+). It participates in isoprenoid biosynthesis; isopentenyl diphosphate biosynthesis via DXP pathway; isopentenyl diphosphate from 1-deoxy-D-xylulose 5-phosphate: step 1/6. In terms of biological role, catalyzes the NADPH-dependent rearrangement and reduction of 1-deoxy-D-xylulose-5-phosphate (DXP) to 2-C-methyl-D-erythritol 4-phosphate (MEP). This Psychrobacter cryohalolentis (strain ATCC BAA-1226 / DSM 17306 / VKM B-2378 / K5) protein is 1-deoxy-D-xylulose 5-phosphate reductoisomerase.